Consider the following 525-residue polypeptide: DEAD-box ATP-dependent RNA helicase CshA (525 aa).

The Q motif motif lies at Thr-2–Ala-30. Residues Ile-33 to Ile-203 enclose the Helicase ATP-binding domain. Ala-46–Thr-53 contributes to the ATP binding site. The DEAD box motif lies at Asp-151–Asp-154. Residues Asn-214–Ala-374 form the Helicase C-terminal domain. Residues Thr-428–Ala-525 are disordered. The span at Asp-458 to Gly-503 shows a compositional bias: basic and acidic residues. Residues Glu-515 to Ala-525 show a composition bias toward basic residues.

This sequence belongs to the DEAD box helicase family. CshA subfamily. In terms of assembly, oligomerizes, may be a member of the RNA degradosome.

It localises to the cytoplasm. It carries out the reaction ATP + H2O = ADP + phosphate + H(+). Functionally, DEAD-box RNA helicase possibly involved in RNA degradation. Unwinds dsRNA in both 5'- and 3'-directions, has RNA-dependent ATPase activity. In Bacillus cereus (strain ATCC 10987 / NRS 248), this protein is DEAD-box ATP-dependent RNA helicase CshA.